Reading from the N-terminus, the 304-residue chain is Methionyl-tRNA formyltransferase (304 aa).

106-109 (SLLP) contributes to the (6S)-5,6,7,8-tetrahydrofolate binding site.

Belongs to the Fmt family.

It catalyses the reaction L-methionyl-tRNA(fMet) + (6R)-10-formyltetrahydrofolate = N-formyl-L-methionyl-tRNA(fMet) + (6S)-5,6,7,8-tetrahydrofolate + H(+). Its function is as follows. Attaches a formyl group to the free amino group of methionyl-tRNA(fMet). The formyl group appears to play a dual role in the initiator identity of N-formylmethionyl-tRNA by promoting its recognition by IF2 and preventing the misappropriation of this tRNA by the elongation apparatus. This is Methionyl-tRNA formyltransferase from Thermosipho africanus (strain TCF52B).